Here is a 330-residue protein sequence, read N- to C-terminus: DNA primase small subunit PriS (330 aa).

Active-site residues include aspartate 101 and aspartate 103. Zn(2+) is bound by residues cysteine 116, cysteine 119, cysteine 128, and aspartate 131. Residue aspartate 235 is part of the active site.

The protein belongs to the eukaryotic-type primase small subunit family. As to quaternary structure, heterodimer of a small subunit (PriS) and a large subunit (PriL). The cofactor is Mg(2+). It depends on Mn(2+) as a cofactor.

Functionally, catalytic subunit of DNA primase, an RNA polymerase that catalyzes the synthesis of short RNA molecules used as primers for DNA polymerase during DNA replication. The small subunit contains the primase catalytic core and has DNA synthesis activity on its own. Binding to the large subunit stabilizes and modulates the activity, increasing the rate of DNA synthesis while decreasing the length of the DNA fragments, and conferring RNA synthesis capability. The DNA polymerase activity may enable DNA primase to also catalyze primer extension after primer synthesis. May also play a role in DNA repair. In Saccharolobus islandicus (strain Y.N.15.51 / Yellowstone #2) (Sulfolobus islandicus), this protein is DNA primase small subunit PriS.